Consider the following 86-residue polypeptide: Small ribosomal subunit protein bS20 (86 aa).

The segment covering 1-11 (MANHKSALKRA) has biased composition (basic residues). Residues 1–27 (MANHKSALKRARQNEERRIRNRARKTR) are disordered.

The protein belongs to the bacterial ribosomal protein bS20 family.

Its function is as follows. Binds directly to 16S ribosomal RNA. This is Small ribosomal subunit protein bS20 from Syntrophobacter fumaroxidans (strain DSM 10017 / MPOB).